The following is a 197-amino-acid chain: Negative modulator of initiation of replication (197 aa).

Belongs to the SeqA family. Homodimer. Polymerizes to form helical filaments.

Its subcellular location is the cytoplasm. In terms of biological role, negative regulator of replication initiation, which contributes to regulation of DNA replication and ensures that replication initiation occurs exactly once per chromosome per cell cycle. Binds to pairs of hemimethylated GATC sequences in the oriC region, thus preventing assembly of replication proteins and re-initiation at newly replicated origins. Repression is relieved when the region becomes fully methylated. The protein is Negative modulator of initiation of replication of Pseudoalteromonas translucida (strain TAC 125).